Reading from the N-terminus, the 266-residue chain is MVTAALKRFWSGGHGEAGGEAGGATTVAVKPGLWTRLSTWAGALLRDYAEACGDAAAAARARPGRAALYVGLLGGAAACCALAPSEAAFEEALLDASGSLLLLAPATRNRHSEAFLQRLLWLRGRGRLRHVNLGFCSLVYEAPFDAQASLYQARCRYLQPRWVDFPGRILDVGFVGRWWILQNRMHDCDINDDEFLHLPAHLRVVAPHQLHSEANERLFEEKYKPIILTDDQVDQALWEEQVLQKERKDRLALSEADSLVQSDVSR.

Residues 1–37 (MVTAALKRFWSGGHGEAGGEAGGATTVAVKPGLWTRL) constitute a mitochondrion transit peptide. Topologically, residues 38–65 (STWAGALLRDYAEACGDAAAAARARPGR) are mitochondrial matrix. A helical membrane pass occupies residues 66–83 (AALYVGLLGGAAACCALA). At 84 to 266 (PSEAAFEEAL…DSLVQSDVSR (183 aa)) the chain is on the mitochondrial intermembrane side.

In terms of assembly, component of the TIM22 complex, which core is composed of TIMM22, associated with TIMM10 (TIMM10A and/or TIMM10B), TIMM9, AGK and TIMM29. Interacts with TIMM10B; the interaction is direct. Interacts with TOMM40; linking the TIM22 complex to the TOM complex. Interacts with TIMM22 (when oxidized); the interaction is direct.

Its subcellular location is the mitochondrion inner membrane. Its function is as follows. Component of the TIM22 complex, a complex that mediates the import and insertion of multi-pass transmembrane proteins into the mitochondrial inner membrane. The TIM22 complex forms a twin-pore translocase that uses the membrane potential as the external driving force. Required for the stability of the TIM22 complex and functions in the assembly of the TIMM22 protein into the TIM22 complex. May facilitate cooperation between TIM22 and TOM complexes by interacting with TOMM40. The protein is Mitochondrial import inner membrane translocase subunit Tim29 (Timm29) of Mus musculus (Mouse).